We begin with the raw amino-acid sequence, 203 residues long: B-cell CLL/lymphoma 7 protein family member B-A (203 aa).

2 disordered regions span residues 55-80 and 94-148; these read KEKE…ESSD and SNQS…EIME. The segment covering 109-129 has biased composition (low complexity); the sequence is ADSSNNSSPPASEPVSPAPQS.

This sequence belongs to the BCL7 family.

The protein is B-cell CLL/lymphoma 7 protein family member B-A (bcl7ba) of Danio rerio (Zebrafish).